We begin with the raw amino-acid sequence, 379 residues long: Glucose-1-phosphate adenylyltransferase (379 aa).

Alpha-D-glucose 1-phosphate contacts are provided by residues Gly-164, Glu-179 to Lys-180, and Ser-190.

The protein belongs to the bacterial/plant glucose-1-phosphate adenylyltransferase family. In terms of assembly, homotetramer.

It catalyses the reaction alpha-D-glucose 1-phosphate + ATP + H(+) = ADP-alpha-D-glucose + diphosphate. The protein operates within glycan biosynthesis; glycogen biosynthesis. In terms of biological role, involved in the biosynthesis of ADP-glucose, a building block required for the elongation reactions to produce glycogen. Catalyzes the reaction between ATP and alpha-D-glucose 1-phosphate (G1P) to produce pyrophosphate and ADP-Glc. This is Glucose-1-phosphate adenylyltransferase from Lactiplantibacillus plantarum (strain ATCC BAA-793 / NCIMB 8826 / WCFS1) (Lactobacillus plantarum).